The primary structure comprises 148 residues: Urease accessory protein UreE (148 aa).

Belongs to the UreE family.

The protein localises to the cytoplasm. In terms of biological role, involved in urease metallocenter assembly. Binds nickel. Probably functions as a nickel donor during metallocenter assembly. In Geobacillus kaustophilus (strain HTA426), this protein is Urease accessory protein UreE.